Reading from the N-terminus, the 110-residue chain is MSVILLNLKFLLCHYSPLIKKSMILNGKYHYICIAPREWEEYSSKNLKQLIVDSCKSHRQQTTCIHGAVTNIAGVSTKLEYYDLKLWMKKQGDNSAYPDQKDYFRMLLDL.

This is an uncharacterized protein from Microplitis demolitor bracovirus (isolate Webb) (MdBV).